A 134-amino-acid chain; its full sequence is Large ribosomal subunit protein uL14 (134 aa).

The protein belongs to the universal ribosomal protein uL14 family. Part of the 50S ribosomal subunit. Forms a cluster with proteins L3 and L19. In the 70S ribosome, L14 and L19 interact and together make contacts with the 16S rRNA in bridges B5 and B8.

In terms of biological role, binds to 23S rRNA. Forms part of two intersubunit bridges in the 70S ribosome. This chain is Large ribosomal subunit protein uL14, found in Deinococcus geothermalis (strain DSM 11300 / CIP 105573 / AG-3a).